We begin with the raw amino-acid sequence, 81 residues long: Putative defensin-like protein 102 (81 aa).

An N-terminal signal peptide occupies residues 1 to 24 (MTTTMKTFVAFVLTVFFIMSSAHC). 4 disulfides stabilise this stretch: Cys-43–Cys-78, Cys-49–Cys-71, Cys-57–Cys-76, and Cys-61–Cys-77.

This sequence belongs to the DEFL family.

It localises to the secreted. This Arabidopsis thaliana (Mouse-ear cress) protein is Putative defensin-like protein 102.